The sequence spans 147 residues: Small ribosomal subunit protein bS16 (147 aa).

The interval 81 to 147 (QKFTGDTSPS…GDNSGEKAEA (67 aa)) is disordered. Basic and acidic residues-rich tracts occupy residues 95-104 (QPERPNKDDL) and 114-125 (EAPREAITKKSE). Low complexity predominate over residues 126–140 (GAAADEASESAAGDN).

The protein belongs to the bacterial ribosomal protein bS16 family.

This is Small ribosomal subunit protein bS16 from Cutibacterium acnes (strain DSM 16379 / KPA171202) (Propionibacterium acnes).